The primary structure comprises 311 residues: Porphobilinogen deaminase (311 aa).

Cysteine 240 is subject to S-(dipyrrolylmethanemethyl)cysteine.

It belongs to the HMBS family. As to quaternary structure, monomer. Dipyrromethane is required as a cofactor.

The enzyme catalyses 4 porphobilinogen + H2O = hydroxymethylbilane + 4 NH4(+). It functions in the pathway porphyrin-containing compound metabolism; protoporphyrin-IX biosynthesis; coproporphyrinogen-III from 5-aminolevulinate: step 2/4. Tetrapolymerization of the monopyrrole PBG into the hydroxymethylbilane pre-uroporphyrinogen in several discrete steps. The polypeptide is Porphobilinogen deaminase (Natranaerobius thermophilus (strain ATCC BAA-1301 / DSM 18059 / JW/NM-WN-LF)).